Consider the following 233-residue polypeptide: UPF0758 protein Rcas_0037 (233 aa).

Residues 107-229 (QIRSPTDAAQ…FVSMRERGLA (123 aa)) form the MPN domain. Residues histidine 178, histidine 180, and aspartate 191 each coordinate Zn(2+). The JAMM motif motif lies at 178 to 191 (HNHPSGDPTPSPED).

It belongs to the UPF0758 family.

This is UPF0758 protein Rcas_0037 from Roseiflexus castenholzii (strain DSM 13941 / HLO8).